Here is a 165-residue protein sequence, read N- to C-terminus: Shikimate kinase (165 aa).

An ATP-binding site is contributed by 11 to 16; it reads GAGKTT. Threonine 15 is a Mg(2+) binding site. Residues aspartate 33, arginine 57, and glycine 78 each coordinate substrate. Residue arginine 116 coordinates ATP. Arginine 134 is a substrate binding site.

Belongs to the shikimate kinase family. Monomer. Mg(2+) serves as cofactor.

The protein resides in the cytoplasm. It carries out the reaction shikimate + ATP = 3-phosphoshikimate + ADP + H(+). It functions in the pathway metabolic intermediate biosynthesis; chorismate biosynthesis; chorismate from D-erythrose 4-phosphate and phosphoenolpyruvate: step 5/7. Catalyzes the specific phosphorylation of the 3-hydroxyl group of shikimic acid using ATP as a cosubstrate. The chain is Shikimate kinase from Bacillus cereus (strain AH187).